The chain runs to 77 residues: Translation initiation factor IF-1, chloroplastic (77 aa).

One can recognise an S1-like domain in the interval 1–71; that stretch reads MKEQKLIHEG…TRGRIIYRLR (71 aa).

This sequence belongs to the IF-1 family. Component of the 30S ribosomal translation pre-initiation complex which assembles on the 30S ribosome in the order IF-2 and IF-3, IF-1 and N-formylmethionyl-tRNA(fMet); mRNA recruitment can occur at any time during PIC assembly.

It is found in the plastid. The protein resides in the chloroplast. Its function is as follows. One of the essential components for the initiation of protein synthesis. Stabilizes the binding of IF-2 and IF-3 on the 30S subunit to which N-formylmethionyl-tRNA(fMet) subsequently binds. Helps modulate mRNA selection, yielding the 30S pre-initiation complex (PIC). Upon addition of the 50S ribosomal subunit IF-1, IF-2 and IF-3 are released leaving the mature 70S translation initiation complex. The protein is Translation initiation factor IF-1, chloroplastic of Acorus calamus var. americanus (American sweet flag).